A 660-amino-acid chain; its full sequence is Iron(3+)-hydroxamate import system permease protein FhuB (660 aa).

18 helical membrane passes run 5–25 (IALF…ALTW), 62–82 (LAIS…FQQV), 93–113 (LGVA…AIPG), 118–138 (QFAA…VAWG), 147–167 (ILAG…LVIF), 197–217 (QLLG…LMGL), 240–260 (AIVI…IGLF), 277–297 (LMLA…IILW), 303–323 (MEVS…LWLL), 348–368 (LAFA…ALSF), 391–411 (WPRI…GCII), 424–444 (VLGI…LVPG), 447–467 (FGWL…IIMI), 479–499 (MLLA…MLQA), 528–548 (GIVM…LTIL), 567–587 (IALL…IGPL), 607–627 (MPHI…ADWC), and 635–655 (FQIP…IYLL).

The protein belongs to the binding-protein-dependent transport system permease family. FecCD subfamily. The complex is composed of two ATP-binding proteins (FhuC), a transmembrane protein (FhuB) and a solute-binding protein (FhuD). FhuB interacts with FhuC. FhuB interacts with FhuD. FhuB binds substrate-loaded FhuD more strongly than FhuD alone.

The protein resides in the cell inner membrane. In terms of biological role, part of the ABC transporter complex FhuCDB involved in iron(3+)-hydroxamate import. Responsible for the translocation of the substrate across the membrane. The protein is Iron(3+)-hydroxamate import system permease protein FhuB (fhuB) of Escherichia coli (strain K12).